The following is a 495-amino-acid chain: Ectonucleoside triphosphate diphosphohydrolase 2 (495 aa).

The Cytoplasmic portion of the chain corresponds to 1–4; sequence MAGK. Residues 5–25 traverse the membrane as a helical segment; sequence LVSLVPPLLLAAAGLTGLLLL. Residues 26–462 lie on the Extracellular side of the membrane; that stretch reads CVPTQDVREP…PGLRKGTHFS (437 aa). N-linked (GlcNAc...) asparagine glycosylation is present at N64. A disulfide bridge links C75 with C99. N129 carries N-linked (GlcNAc...) asparagine glycosylation. Catalysis depends on E165, which acts as the Proton acceptor. ATP is bound at residue 204–208; it reads GASTQ. Intrachain disulfides connect C242–C284 and C265–C310. N-linked (GlcNAc...) asparagine glycans are attached at residues N294, N306, and N319. Intrachain disulfides connect C323/C328 and C377/C399. Residues N378 and N443 are each glycosylated (N-linked (GlcNAc...) asparagine). Residues 463 to 483 form a helical membrane-spanning segment; it reads SWVALLLLFTVLILAALVLLL. Topologically, residues 484–495 are cytoplasmic; sequence RQVRSAKSPGAL.

The protein belongs to the GDA1/CD39 NTPase family. Ca(2+) is required as a cofactor. Mg(2+) serves as cofactor. In terms of tissue distribution, expressed in brain, heart, vas deferens, kidney, skeletal muscle, thymus, lung and spleen. Weak expression in liver.

It is found in the cell membrane. Functionally, in the nervous system, could hydrolyze ATP and other nucleotides to regulate purinergic neurotransmission. Hydrolyzes ADP only to a marginal extent. The sequence is that of Ectonucleoside triphosphate diphosphohydrolase 2 (Entpd2) from Rattus norvegicus (Rat).